The primary structure comprises 561 residues: Dihydroxy-acid dehydratase (561 aa).

A [2Fe-2S] cluster-binding site is contributed by cysteine 51. Aspartate 83 serves as a coordination point for Mg(2+). Cysteine 124 serves as a coordination point for [2Fe-2S] cluster. Mg(2+) is bound by residues aspartate 125 and lysine 126. Lysine 126 is modified (N6-carboxylysine). Position 196 (cysteine 196) interacts with [2Fe-2S] cluster. Glutamate 447 contacts Mg(2+). Serine 473 functions as the Proton acceptor in the catalytic mechanism.

Belongs to the IlvD/Edd family. In terms of assembly, homodimer. [2Fe-2S] cluster is required as a cofactor. Requires Mg(2+) as cofactor.

The enzyme catalyses (2R)-2,3-dihydroxy-3-methylbutanoate = 3-methyl-2-oxobutanoate + H2O. It catalyses the reaction (2R,3R)-2,3-dihydroxy-3-methylpentanoate = (S)-3-methyl-2-oxopentanoate + H2O. Its pathway is amino-acid biosynthesis; L-isoleucine biosynthesis; L-isoleucine from 2-oxobutanoate: step 3/4. It functions in the pathway amino-acid biosynthesis; L-valine biosynthesis; L-valine from pyruvate: step 3/4. Functions in the biosynthesis of branched-chain amino acids. Catalyzes the dehydration of (2R,3R)-2,3-dihydroxy-3-methylpentanoate (2,3-dihydroxy-3-methylvalerate) into 2-oxo-3-methylpentanoate (2-oxo-3-methylvalerate) and of (2R)-2,3-dihydroxy-3-methylbutanoate (2,3-dihydroxyisovalerate) into 2-oxo-3-methylbutanoate (2-oxoisovalerate), the penultimate precursor to L-isoleucine and L-valine, respectively. The polypeptide is Dihydroxy-acid dehydratase (Oceanobacillus iheyensis (strain DSM 14371 / CIP 107618 / JCM 11309 / KCTC 3954 / HTE831)).